Consider the following 388-residue polypeptide: MDMQISRQQAAGGASGHLTIDLGALRDNYLTLAGMAPASQTAAVVKADAYGLGADVVSQTLFEAGCRNFFVAHIDEALALRLRLSAKARIFVLNGLQPGNETSCAAMAITPVLNSLEQIAQWSAHARELGKTLTAAVQIDTGMCRLGLSPEELEILSAKQQLLDGIEIAFVMSHLACADEPDHVSNAAQLAVMRKAATAFPETPVCFSNSGGIFLGNDYHNALLRPGIALYGGAPSAAGPNPMKPVVRLDVAVIQTRTVPAGSLVGYGGSFTASVPTRLATIAAGYADGLPRSLSNRGAAWYNGVRLPIAGRVSMDSIILDISALPEGTLTQGSLVQMIGPDQTLEDIAEDAGTIAYEILTGLGRRYRRSYIQPGMSPATASTSVNHK.

K46 functions as the Proton acceptor; specific for D-alanine in the catalytic mechanism. K46 carries the N6-(pyridoxal phosphate)lysine modification. R145 lines the substrate pocket. The active-site Proton acceptor; specific for L-alanine is the Y267. M315 provides a ligand contact to substrate.

It belongs to the alanine racemase family. The cofactor is pyridoxal 5'-phosphate.

The enzyme catalyses L-alanine = D-alanine. Isomerizes L-alanine to D-alanine which is then oxidized to pyruvate by DadA. This Agrobacterium fabrum (strain C58 / ATCC 33970) (Agrobacterium tumefaciens (strain C58)) protein is Alanine racemase, catabolic (dadB).